Here is a 145-residue protein sequence, read N- to C-terminus: 3-hydroxyacyl-[acyl-carrier-protein] dehydratase FabZ (145 aa).

His-47 is an active-site residue.

It belongs to the thioester dehydratase family. FabZ subfamily.

It is found in the cytoplasm. It catalyses the reaction a (3R)-hydroxyacyl-[ACP] = a (2E)-enoyl-[ACP] + H2O. Involved in unsaturated fatty acids biosynthesis. Catalyzes the dehydration of short chain beta-hydroxyacyl-ACPs and long chain saturated and unsaturated beta-hydroxyacyl-ACPs. This Geotalea uraniireducens (strain Rf4) (Geobacter uraniireducens) protein is 3-hydroxyacyl-[acyl-carrier-protein] dehydratase FabZ.